Reading from the N-terminus, the 161-residue chain is Phosphopantetheine adenylyltransferase (161 aa).

Thr10 contacts substrate. ATP is bound by residues 10–11 and His18; that span reads TF. Substrate-binding residues include Lys42, Leu74, and Arg88. ATP-binding positions include 89–91, Glu99, and 124–130; these read GIR and WRYLSST.

It belongs to the bacterial CoaD family. Homohexamer. Mg(2+) serves as cofactor.

The protein resides in the cytoplasm. The enzyme catalyses (R)-4'-phosphopantetheine + ATP + H(+) = 3'-dephospho-CoA + diphosphate. The protein operates within cofactor biosynthesis; coenzyme A biosynthesis; CoA from (R)-pantothenate: step 4/5. Reversibly transfers an adenylyl group from ATP to 4'-phosphopantetheine, yielding dephospho-CoA (dPCoA) and pyrophosphate. The protein is Phosphopantetheine adenylyltransferase of Haemophilus ducreyi (strain 35000HP / ATCC 700724).